The sequence spans 450 residues: FAD-linked oxidoreductase ptmO (450 aa).

Residues 32-203 enclose the FAD-binding PCMH-type domain; the sequence is PPELPYAIVR…TRFFIRTRPA (172 aa).

Belongs to the oxygen-dependent FAD-linked oxidoreductase family. Requires FAD as cofactor.

It participates in secondary metabolite biosynthesis. FAD-linked oxidoreductase; part of the gene cluster that mediates the biosynthesis of the indole diterpenes penitrems. The geranylgeranyl diphosphate (GGPP) synthase ptmG catalyzes the first step in penitrem biosynthesis via conversion of farnesyl pyrophosphate and isopentyl pyrophosphate into geranylgeranyl pyrophosphate (GGPP). Condensation of indole-3-glycerol phosphate with GGPP by the prenyl transferase ptmC then forms 3-geranylgeranylindole (3-GGI). Epoxidation by the FAD-dependent monooxygenase ptmM leads to a epoxidized-GGI that is substrate of the terpene cyclase ptmB for cyclization to yield paspaline. Paspaline is subsequently converted to 13-desoxypaxilline by the cytochrome P450 monooxygenase ptmP, the latter being then converted to paxilline by the cytochrome P450 monooxygenase ptmQ. Paxilline is converted to beta-paxitriol via C-10 ketoreduction by the short-chain dehydrogenase ptmH which can be monoprenylated at the C-20 by the indole diterpene prenyltransferase ptmD. A two-step elimination (acetylation and elimination) process performed by the O-acetyltransferase ptmV and ptmI leads to the production of the prenylated form of penijanthine. The FAD-linked oxidoreductase ptmO then converts the prenylated form of penijanthine into PC-M5 which is in turn transformed into PC-M4 by the aromatic dimethylallyltransferase ptmE. Five sequential oxidative transformations performed by the cytochrome P450 monooxygenases ptmK, ptmU, ptmL, ptmN and ptmJ yield the various penitrem compounds. PtmK, ptmU and ptmM are involved in the formation of the key bicyclic ring of penitrem C via the formation of the intermediates secopenitrem D and penitrem D. PtmL catalyzes the epoxidation of penitrem D and C to yield penitrem B and F, respectively. PtmJ catalyzes the last benzylic hydroxylation to convert penitrem B to prenitrem E and penitrem F to penitrem A. In Penicillium ochrochloron, this protein is FAD-linked oxidoreductase ptmO.